The following is a 94-amino-acid chain: Small ribosomal subunit protein bS16 (94 aa).

It belongs to the bacterial ribosomal protein bS16 family.

The chain is Small ribosomal subunit protein bS16 from Thermosipho africanus (strain TCF52B).